The sequence spans 44 residues: MRDLKTYLSVAPVLSTLWFASLAGLLIEINRLFPDALTFPFFSF.

A helical transmembrane segment spans residues 7 to 27; it reads YLSVAPVLSTLWFASLAGLLI.

This sequence belongs to the PsaJ family.

The protein localises to the plastid. Its subcellular location is the chloroplast thylakoid membrane. Functionally, may help in the organization of the PsaE and PsaF subunits. In Barbarea verna (Land cress), this protein is Photosystem I reaction center subunit IX.